Consider the following 206-residue polypeptide: Isopentenyl-diphosphate Delta-isomerase (206 aa).

Positions 44 and 51 each coordinate Mn(2+). The region spanning 49–183 (ALHLAFSCHV…PWAFSPWLVL (135 aa)) is the Nudix hydrolase domain. The active site involves Cys86. Cys86 is a binding site for Mg(2+). His88 lines the Mn(2+) pocket. Glu106 is a binding site for Mg(2+). Mn(2+) contacts are provided by Glu133 and Glu135. Glu135 is an active-site residue.

Belongs to the IPP isomerase type 1 family. Mg(2+) serves as cofactor. Requires Mn(2+) as cofactor.

It localises to the cytoplasm. It carries out the reaction isopentenyl diphosphate = dimethylallyl diphosphate. It participates in isoprenoid biosynthesis; dimethylallyl diphosphate biosynthesis; dimethylallyl diphosphate from isopentenyl diphosphate: step 1/1. In terms of biological role, catalyzes the 1,3-allylic rearrangement of the homoallylic substrate isopentenyl (IPP) to its highly electrophilic allylic isomer, dimethylallyl diphosphate (DMAPP). The protein is Isopentenyl-diphosphate Delta-isomerase of Agromyces mediolanus (Corynebacterium mediolanum).